The sequence spans 622 residues: Threonine--tRNA ligase (622 aa).

Positions 1-134 (MKTLLIHSDY…GHPLSELSRK (134 aa)) are editing domain. The tract at residues 199–498 (PHVKYIKEKE…TLEDKPPALP (300 aa)) is catalytic. Positions 291, 343, and 467 each coordinate Zn(2+).

Belongs to the class-II aminoacyl-tRNA synthetase family. In terms of assembly, homodimer. It depends on Zn(2+) as a cofactor.

It localises to the cytoplasm. It carries out the reaction tRNA(Thr) + L-threonine + ATP = L-threonyl-tRNA(Thr) + AMP + diphosphate + H(+). Catalyzes the attachment of threonine to tRNA(Thr) in a two-step reaction: L-threonine is first activated by ATP to form Thr-AMP and then transferred to the acceptor end of tRNA(Thr). Also edits incorrectly charged L-seryl-tRNA(Thr). This is Threonine--tRNA ligase from Methanococcus vannielii (strain ATCC 35089 / DSM 1224 / JCM 13029 / OCM 148 / SB).